A 162-amino-acid polypeptide reads, in one-letter code: Caveolin-2 (162 aa).

Residues 1 to 86 (MGLETEKADV…FEISKYVLYK (86 aa)) are Cytoplasmic-facing. Tyrosine 19 is modified (phosphotyrosine; by SRC). Phosphoserine occurs at positions 20 and 23. The helical intramembrane region spans 87–107 (FLTVFLAIPLAFAAGVLFAVL). The Cytoplasmic portion of the chain corresponds to 108-162 (SCLHIWILMPFVKTCLMVLPSVQTIWRSVTDVVIAPLCASIGRSFSSVGLQLSHD).

This sequence belongs to the caveolin family. In terms of assembly, monomer or homodimer. Interacts with CAV1; the interaction forms a stable heterooligomeric complex that is required for targeting to lipid rafts and for caveolae formation. Tyrosine phosphorylated forms do not form heterooligomers with the Tyr-19-phosphorylated form existing as a monomer or dimer. Interacts (tyrosine phosphorylated form) with the SH2 domain-containing proteins, RASA1, NCK1 and SRC. Interacts (tyrosine phosphorylated form) with INSR. Interacts (Tyr-19 phosphorylated form) with MAPK1 (phosphorylated form); the interaction, promoted by insulin, leads to nuclear location and MAPK1 activation. Interacts with STAT3; the interaction is increased on insulin-induced tyrosine phosphorylation leading to STAT activation. Phosphorylated on serine and tyrosine residues. CAV1 promotes phosphorylation on Ser-23 which then targets the complex to the plasma membrane, lipid rafts and caveolae. Phosphorylation on Tyr-19 is required for insulin-induced phosphorylation of MAPK1 and DNA binding of STAT3. Tyrosine phosphorylation is induced by both EGF and insulin.

It is found in the nucleus. The protein resides in the cytoplasm. The protein localises to the golgi apparatus membrane. It localises to the cell membrane. Its subcellular location is the membrane. It is found in the caveola. May act as a scaffolding protein within caveolar membranes. Interacts directly with G-protein alpha subunits and can functionally regulate their activity. Acts as an accessory protein in conjunction with CAV1 in targeting to lipid rafts and driving caveolae formation. Positive regulator of cellular mitogenesis of the MAPK signaling pathway. Required for the insulin-stimulated nuclear translocation and activation of MAPK1 and STAT3, and the subsequent regulation of cell cycle progression. This is Caveolin-2 (CAV2) from Oryctolagus cuniculus (Rabbit).